The following is a 235-amino-acid chain: ATP phosphoribosyltransferase (235 aa).

The protein belongs to the ATP phosphoribosyltransferase family. Short subfamily. In terms of assembly, heteromultimer composed of HisG and HisZ subunits.

It localises to the cytoplasm. The catalysed reaction is 1-(5-phospho-beta-D-ribosyl)-ATP + diphosphate = 5-phospho-alpha-D-ribose 1-diphosphate + ATP. It functions in the pathway amino-acid biosynthesis; L-histidine biosynthesis; L-histidine from 5-phospho-alpha-D-ribose 1-diphosphate: step 1/9. Catalyzes the condensation of ATP and 5-phosphoribose 1-diphosphate to form N'-(5'-phosphoribosyl)-ATP (PR-ATP). Has a crucial role in the pathway because the rate of histidine biosynthesis seems to be controlled primarily by regulation of HisG enzymatic activity. The protein is ATP phosphoribosyltransferase of Synechococcus sp. (strain JA-2-3B'a(2-13)) (Cyanobacteria bacterium Yellowstone B-Prime).